A 963-amino-acid polypeptide reads, in one-letter code: Bifunctional glutamine synthetase adenylyltransferase/adenylyl-removing enzyme (963 aa).

The adenylyl removase stretch occupies residues 1–453 (MLTTLIPLSQ…IFNEIIGEEE (453 aa)). The interval 461-963 (VNEKLAEWKD…VREMWQRLLA (503 aa)) is adenylyl transferase.

The protein belongs to the GlnE family. Mg(2+) serves as cofactor.

It catalyses the reaction [glutamine synthetase]-O(4)-(5'-adenylyl)-L-tyrosine + phosphate = [glutamine synthetase]-L-tyrosine + ADP. It carries out the reaction [glutamine synthetase]-L-tyrosine + ATP = [glutamine synthetase]-O(4)-(5'-adenylyl)-L-tyrosine + diphosphate. In terms of biological role, involved in the regulation of glutamine synthetase GlnA, a key enzyme in the process to assimilate ammonia. When cellular nitrogen levels are high, the C-terminal adenylyl transferase (AT) inactivates GlnA by covalent transfer of an adenylyl group from ATP to specific tyrosine residue of GlnA, thus reducing its activity. Conversely, when nitrogen levels are low, the N-terminal adenylyl removase (AR) activates GlnA by removing the adenylyl group by phosphorolysis, increasing its activity. The regulatory region of GlnE binds the signal transduction protein PII (GlnB) which indicates the nitrogen status of the cell. This is Bifunctional glutamine synthetase adenylyltransferase/adenylyl-removing enzyme from Mannheimia haemolytica (Pasteurella haemolytica).